Reading from the N-terminus, the 133-residue chain is Profilin Sal k 4.0201 (133 aa).

An intrachain disulfide couples Cys95 to Cys117.

Belongs to the profilin family. As to quaternary structure, occurs in many kinds of cells as a complex with monomeric actin in a 1:1 ratio. As to expression, expressed in pollen (at protein and mRNA level).

Its subcellular location is the cytoplasm. It localises to the cytoskeleton. Binds to actin and affects the structure of the cytoskeleton. At high concentrations, profilin prevents the polymerization of actin, whereas it enhances it at low concentrations. This chain is Profilin Sal k 4.0201, found in Kali turgidum (Prickly saltwort).